A 288-amino-acid chain; its full sequence is 33 kDa chaperonin (288 aa).

2 cysteine pairs are disulfide-bonded: Cys233–Cys235 and Cys267–Cys270.

It belongs to the HSP33 family. Under oxidizing conditions two disulfide bonds are formed involving the reactive cysteines. Under reducing conditions zinc is bound to the reactive cysteines and the protein is inactive.

The protein resides in the cytoplasm. Functionally, redox regulated molecular chaperone. Protects both thermally unfolding and oxidatively damaged proteins from irreversible aggregation. Plays an important role in the bacterial defense system toward oxidative stress. The protein is 33 kDa chaperonin of Pasteurella multocida (strain Pm70).